Here is a 179-residue protein sequence, read N- to C-terminus: Ribosome maturation factor RimM (179 aa).

The PRC barrel domain occupies 95 to 174 (KDEFFYFDIL…QIFCTQDAFL (80 aa)).

Belongs to the RimM family. Binds ribosomal protein uS19.

Its subcellular location is the cytoplasm. Its function is as follows. An accessory protein needed during the final step in the assembly of 30S ribosomal subunit, possibly for assembly of the head region. Essential for efficient processing of 16S rRNA. May be needed both before and after RbfA during the maturation of 16S rRNA. It has affinity for free ribosomal 30S subunits but not for 70S ribosomes. This Campylobacter jejuni subsp. doylei (strain ATCC BAA-1458 / RM4099 / 269.97) protein is Ribosome maturation factor RimM.